The primary structure comprises 126 residues: UPF0738 protein BH2850 (126 aa).

The protein belongs to the UPF0738 family.

This chain is UPF0738 protein BH2850, found in Halalkalibacterium halodurans (strain ATCC BAA-125 / DSM 18197 / FERM 7344 / JCM 9153 / C-125) (Bacillus halodurans).